The following is a 520-amino-acid chain: 2-isopropylmalate synthase (520 aa).

The 263-residue stretch at Val-5–Tyr-267 folds into the Pyruvate carboxyltransferase domain. The Mn(2+) site is built by Asp-14, His-202, His-204, and Asn-238. The interval Arg-392–Val-520 is regulatory domain.

This sequence belongs to the alpha-IPM synthase/homocitrate synthase family. LeuA type 1 subfamily. As to quaternary structure, homodimer. The cofactor is Mn(2+).

Its subcellular location is the cytoplasm. It carries out the reaction 3-methyl-2-oxobutanoate + acetyl-CoA + H2O = (2S)-2-isopropylmalate + CoA + H(+). It participates in amino-acid biosynthesis; L-leucine biosynthesis; L-leucine from 3-methyl-2-oxobutanoate: step 1/4. In terms of biological role, catalyzes the condensation of the acetyl group of acetyl-CoA with 3-methyl-2-oxobutanoate (2-ketoisovalerate) to form 3-carboxy-3-hydroxy-4-methylpentanoate (2-isopropylmalate). The chain is 2-isopropylmalate synthase from Yersinia pseudotuberculosis serotype O:1b (strain IP 31758).